We begin with the raw amino-acid sequence, 68 residues long: Conotoxin tx3b (68 aa).

The first 19 residues, 1–19, serve as a signal peptide directing secretion; it reads MSKLGALLTICLLLFSLTA. Positions 20 to 52 are excised as a propeptide; sequence VPLDGDQHADQPAQRLQDRIPTEDHPLFDPNKR. 3 disulfide bridges follow: cysteine 53/cysteine 67, cysteine 54/cysteine 63, and cysteine 59/cysteine 66. At methionine 61 the chain carries Methionine sulfoxide; partial. Position 67 is a cysteine amide (cysteine 67).

As to expression, expressed by the venom duct.

It is found in the secreted. Intracranial injection into mice causes scratching, hyperactivity and circular motion. The chain is Conotoxin tx3b from Conus textile (Cloth-of-gold cone).